Here is a 380-residue protein sequence, read N- to C-terminus: GDP-mannose:cellobiosyl-diphosphopolyprenol alpha-mannosyltransferase (380 aa).

This sequence belongs to the glycosyltransferase group 1 family. Glycosyltransferase 4 subfamily.

It catalyses the reaction beta-D-Glc-(1-&gt;4)-alpha-D-Glc-di-trans,octa-cis-undecaprenyl diphosphate + GDP-alpha-D-mannose = alpha-D-Man-(1-&gt;3)-beta-D-Glc-(1-&gt;4)-alpha-D-Glc-1-di-trans,octa-cis-undecaprenyl diphosphate + GDP + H(+). Involved in the biosynthesis of the exopolysaccharide xanthan, a polymer that is comprised of repeating pentasaccharide units with the structure of a beta-(1,4)-linked D-glucose backbone with trisaccharide side chains composed of mannose-beta-(1,4)-glucuronic acid-beta-(1,2)-mannose attached to alternate glucose residues in the backbone by alpha-(1,3) linkages. Xanthan is involved in pathogenicity but has also been used in a variety of applications as a specialty polymer for commercial applications, including food additives, where they act as viscosifying, stabilizing, emulsifying, or gelling agents. The chain is GDP-mannose:cellobiosyl-diphosphopolyprenol alpha-mannosyltransferase (gumH) from Xanthomonas oryzae pv. oryzae (strain PXO99A).